We begin with the raw amino-acid sequence, 637 residues long: Neutral ceramidase (637 aa).

Residue H34 coordinates Mg(2+). Zn(2+)-binding residues include H96 and H204. The Nucleophile role is filled by S256. Residues E417 and Y453 each coordinate Zn(2+). Mg(2+)-binding residues include D575, D577, and T580.

The protein belongs to the neutral ceramidase family. The cofactor is Zn(2+). Mg(2+) serves as cofactor.

The enzyme catalyses an N-acylsphing-4-enine + H2O = sphing-4-enine + a fatty acid. The catalysed reaction is an N-acylsphinganine + H2O = sphinganine + a fatty acid. It catalyses the reaction an N-acyl-(4R)-4-hydroxysphinganine + H2O = (4R)-hydroxysphinganine + a fatty acid. It carries out the reaction N-(9Z-octadecenoyl)-sphing-4-enine + H2O = sphing-4-enine + (9Z)-octadecenoate. The enzyme catalyses N-(hexanoyl)sphing-4-enine + H2O = hexanoate + sphing-4-enine. The catalysed reaction is N-hexadecanoylsphing-4-enine + H2O = sphing-4-enine + hexadecanoate. It catalyses the reaction N-octadecanoylsphing-4-enine + H2O = sphing-4-enine + octadecanoate. It carries out the reaction N-eicosanoyl-sphing-4-enine + H2O = eicosanoate + sphing-4-enine. The enzyme catalyses N-(15Z-tetracosenoyl)-sphing-4-enine + H2O = (15Z)-tetracosenoate + sphing-4-enine. The catalysed reaction is N-tetracosanoyl-sphing-4-enine + H2O = tetracosanoate + sphing-4-enine. With respect to regulation, 90% of activity is inhibited by nickel, zinc and calcium ions. Magnesium, cobalt, copper and manganese ions inhibit between 50 and 80% of activity. Catalyzes the cleavage of the N-acyl linkage of the ceramides (Cers) to yield sphingosine (Sph) and free fatty acid. Also catalyzes the synthesis of Cers from Sph and fatty acid. Cers containning C6-C24 fatty acids are well hydrolyzed, and Cers with mono unsaturated fatty acids are much more hydrolyzed than those with saturated fatty acids. In Mycobacterium tuberculosis (strain ATCC 25618 / H37Rv), this protein is Neutral ceramidase.